Reading from the N-terminus, the 365-residue chain is Phosphatidylcholine:ceramide cholinephosphotransferase 2 (365 aa).

Positions 9–50 are disordered; it reads LEGHLESQTNNSTNTYTSPTEAVEEEDKNGKGKPKTLSNGLR. Residues 15-28 show a composition bias toward low complexity; it reads SQTNNSTNTYTSPT. The next 5 helical transmembrane spans lie at 80–100, 128–148, 159–179, 219–239, and 248–268; these read GIAF…ITVV, FSVS…QWLF, FFFI…VTTL, ILCG…TYLF, and FWWY…CILV. His-229 is a catalytic residue. Catalysis depends on residues His-272 and Asp-276. A helical transmembrane segment spans residues 273 to 290; it reads YTVDVIIAYYITTRLFWW. The Cytoplasmic segment spans residues 291–365; that stretch reads YHSMANEKNL…KIGEDNEKST (75 aa). S-palmitoyl cysteine attachment occurs at residues Cys-331, Cys-332, Cys-343, and Cys-348.

Belongs to the sphingomyelin synthase family. Post-translationally, palmitoylated on Cys-331, Cys-332, Cys-343 and Cys-348; which plays an important role in plasma membrane localization. Expression restricted to late round spermatids and elongating spermatids but not detected in late elongate spermatids and Sertoli cells (at protein level).

Its subcellular location is the cell membrane. The protein resides in the golgi apparatus membrane. The enzyme catalyses an N-acylsphing-4-enine + a 1,2-diacyl-sn-glycero-3-phosphocholine = a sphingomyelin + a 1,2-diacyl-sn-glycerol. It carries out the reaction an N-acylsphinganine + a 1,2-diacyl-sn-glycero-3-phosphocholine = an N-acylsphinganine-1-phosphocholine + a 1,2-diacyl-sn-glycerol. It catalyses the reaction an N-acyl-(4R)-4-hydroxysphinganine + a 1,2-diacyl-sn-glycero-3-phosphocholine = an N-acyl-(4R)-4-hydroxysphinganine-phosphocholine + a 1,2-diacyl-sn-glycerol. The catalysed reaction is an N-acylsphing-4-enine + a 1,2-diacyl-sn-glycero-3-phosphoethanolamine = an N-acylsphing-4-enine 1-phosphoethanolamine + a 1,2-diacyl-sn-glycerol. The enzyme catalyses an N-acylsphinganine + a 1,2-diacyl-sn-glycero-3-phosphoethanolamine = an N-acylsphinganine-1-phosphoethanolamine + a 1,2-diacyl-sn-glycerol. It carries out the reaction an N-acyl-(4R)-4-hydroxysphinganine + a 1,2-diacyl-sn-glycero-3-phosphoethanolamine = an N-acyl-(4R)-4-hydroxysphinganine-1-phosphoethanolamine + a 1,2-diacyl-sn-glycerol. It catalyses the reaction 1,2-dihexadecanoyl-sn-glycero-3-phosphocholine + an N-acylsphing-4-enine = 1,2-dihexadecanoyl-sn-glycerol + a sphingomyelin. The catalysed reaction is 1-(9Z-octadecenoyl)-2-acyl-sn-3-glycerol + a sphingomyelin = a 1-(9Z-octadecenoyl)-2-acyl-sn-glycero-3-phosphocholine + an N-acylsphing-4-enine. The enzyme catalyses N-hexadecanoylsphinganine + a 1,2-diacyl-sn-glycero-3-phosphocholine = N-hexadecanoyl-sphinganine-1-phosphocholine + a 1,2-diacyl-sn-glycerol. It carries out the reaction N-hexadecanoyl-(4R)-hydroxysphinganine + a 1,2-diacyl-sn-glycero-3-phosphocholine = N-hexadecanoyl-(4R)-hydroxysphinganine-phosphocholine + a 1,2-diacyl-sn-glycerol. It catalyses the reaction N-hexadecanoylsphinganine + a 1,2-diacyl-sn-glycero-3-phosphoethanolamine = N-hexadecanoyl-sphinganine-1-phosphoethanolamine + a 1,2-diacyl-sn-glycerol. The catalysed reaction is N-hexadecanoyl-(4R)-hydroxysphinganine + a 1,2-diacyl-sn-glycero-3-phosphoethanolamine = N-hexadecanoyl-(4R)-hydroxysphinganine-1-phosphoethanolamine + a 1,2-diacyl-sn-glycerol. The protein operates within sphingolipid metabolism. Functionally, sphingomyelin synthase that primarily contributes to sphingomyelin synthesis and homeostasis at the plasma membrane. Catalyzes the reversible transfer of phosphocholine moiety in sphingomyelin biosynthesis: in the forward reaction transfers phosphocholine head group of phosphatidylcholine (PC) on to ceramide (CER) to form ceramide phosphocholine (sphingomyelin, SM) and diacylglycerol (DAG) as by-product, and in the reverse reaction transfers phosphocholine from SM to DAG to form PC and CER. The direction of the reaction appears to depend on the levels of CER and DAG in the plasma membrane. Does not use free phosphorylcholine or CDP-choline as donors. Can also transfer phosphoethanolamine head group of phosphatidylethanolamine (PE) on to ceramide (CER) to form ceramide phosphoethanolamine (CPE). Regulates receptor-mediated signal transduction via mitogenic DAG and proapoptotic CER, as well as via SM, a structural component of membrane rafts that serve as platforms for signal transduction and protein sorting. To a lesser extent, plays a role in secretory transport via regulation of DAG pool at the Golgi apparatus and its downstream effects on PRKD1. Required for normal bone matrix mineralization. In Rattus norvegicus (Rat), this protein is Phosphatidylcholine:ceramide cholinephosphotransferase 2 (Sgms2).